Consider the following 380-residue polypeptide: Erythronate-4-phosphate dehydrogenase (380 aa).

Positions 45 and 66 each coordinate substrate. Residues D146 and T174 each coordinate NAD(+). R207 is an active-site residue. D231 serves as a coordination point for NAD(+). The active site involves E236. The active-site Proton donor is H253. G256 contributes to the NAD(+) binding site. Y257 contacts substrate.

This sequence belongs to the D-isomer specific 2-hydroxyacid dehydrogenase family. PdxB subfamily. In terms of assembly, homodimer.

It localises to the cytoplasm. It carries out the reaction 4-phospho-D-erythronate + NAD(+) = (R)-3-hydroxy-2-oxo-4-phosphooxybutanoate + NADH + H(+). The protein operates within cofactor biosynthesis; pyridoxine 5'-phosphate biosynthesis; pyridoxine 5'-phosphate from D-erythrose 4-phosphate: step 2/5. Functionally, catalyzes the oxidation of erythronate-4-phosphate to 3-hydroxy-2-oxo-4-phosphonooxybutanoate. This is Erythronate-4-phosphate dehydrogenase from Pseudomonas fluorescens (strain Pf0-1).